Reading from the N-terminus, the 589-residue chain is Inactive poly [ADP-ribose] polymerase RCD1 (589 aa).

Positions lysine 64–tryptophan 153 constitute a WWE domain. In terms of domain architecture, PARP catalytic spans glutamate 248 to valine 469. 2 disordered regions span residues arginine 464–lysine 504 and glutamine 569–leucine 589. The span at leucine 481–proline 503 shows a compositional bias: polar residues. Positions threonine 501–serine 572 constitute an RST domain. Positions lysine 571 to leucine 589 are enriched in basic and acidic residues.

Interacts with the transcription factors NAC013/NTL1 and NAC046. Interacts with dehydration-responsive DREB2 proteins and a number of transcription factors belonging to several protein families. Interacts with turnip crinkle virus (TCV) movement protein P8. In terms of tissue distribution, expressed in young developing tissues, such as young leaves and flowers and root tips. In mature plants, expressed in vasculature of leaves and roots, and guard cells.

The protein resides in the nucleus matrix. In terms of biological role, inactive ADP-ribosyltransferase that functions with SRO1 to regulate oxidative stress, hormonal and developmental responses. Required for embryogenesis, vegetative and reproductive development, and abiotic stress responses. May regulate several stress-responsive genes. Seems to play a larger developmental role than SRO1. Does not bind NAD in vitro. In Arabidopsis thaliana (Mouse-ear cress), this protein is Inactive poly [ADP-ribose] polymerase RCD1 (RCD1).